Here is a 20-residue protein sequence, read N- to C-terminus: Antiviral protein Y3 (20 aa).

The protein is Antiviral protein Y3 of Pleurotus citrinopileatus (Golden oyster mushroom).